Consider the following 243-residue polypeptide: Aspartate/glutamate leucyltransferase (243 aa).

Belongs to the R-transferase family. Bpt subfamily.

It localises to the cytoplasm. The catalysed reaction is N-terminal L-glutamyl-[protein] + L-leucyl-tRNA(Leu) = N-terminal L-leucyl-L-glutamyl-[protein] + tRNA(Leu) + H(+). The enzyme catalyses N-terminal L-aspartyl-[protein] + L-leucyl-tRNA(Leu) = N-terminal L-leucyl-L-aspartyl-[protein] + tRNA(Leu) + H(+). Its function is as follows. Functions in the N-end rule pathway of protein degradation where it conjugates Leu from its aminoacyl-tRNA to the N-termini of proteins containing an N-terminal aspartate or glutamate. The chain is Aspartate/glutamate leucyltransferase from Teredinibacter turnerae (strain ATCC 39867 / T7901).